Consider the following 385-residue polypeptide: uncharacterized protein (385 aa).

The protein belongs to the peptidase M20 family.

This is an uncharacterized protein from Staphylococcus saprophyticus subsp. saprophyticus (strain ATCC 15305 / DSM 20229 / NCIMB 8711 / NCTC 7292 / S-41).